Reading from the N-terminus, the 925-residue chain is Isoleucine--tRNA ligase (925 aa).

The short motif at 57–67 is the 'HIGH' region element; sequence PYANGDIHMGH. E556 contacts L-isoleucyl-5'-AMP. Residues 597–601 carry the 'KMSKS' region motif; that stretch reads KMSKS. Position 600 (K600) interacts with ATP. Zn(2+)-binding residues include C890, C893, C910, and C913.

It belongs to the class-I aminoacyl-tRNA synthetase family. IleS type 1 subfamily. In terms of assembly, monomer. It depends on Zn(2+) as a cofactor.

It localises to the cytoplasm. The enzyme catalyses tRNA(Ile) + L-isoleucine + ATP = L-isoleucyl-tRNA(Ile) + AMP + diphosphate. In terms of biological role, catalyzes the attachment of isoleucine to tRNA(Ile). As IleRS can inadvertently accommodate and process structurally similar amino acids such as valine, to avoid such errors it has two additional distinct tRNA(Ile)-dependent editing activities. One activity is designated as 'pretransfer' editing and involves the hydrolysis of activated Val-AMP. The other activity is designated 'posttransfer' editing and involves deacylation of mischarged Val-tRNA(Ile). This Carboxydothermus hydrogenoformans (strain ATCC BAA-161 / DSM 6008 / Z-2901) protein is Isoleucine--tRNA ligase.